We begin with the raw amino-acid sequence, 130 residues long: Small ribosomal subunit protein uS9 (130 aa).

This sequence belongs to the universal ribosomal protein uS9 family.

This chain is Small ribosomal subunit protein uS9, found in Halalkalibacterium halodurans (strain ATCC BAA-125 / DSM 18197 / FERM 7344 / JCM 9153 / C-125) (Bacillus halodurans).